The following is a 593-amino-acid chain: SPI-1 type 3 secretion system translocon protein SctE (593 aa).

2 coiled-coil regions span residues 151–208 and 287–314; these read DTAK…ATDA and EGRQ…NRIM. 2 consecutive transmembrane segments (helical) span residues 330–350 and 409–429; these read VVAA…GLAV and IVGA…VAVV.

The protein belongs to the SctE/SipB/YopB family. As to quaternary structure, the core secretion machinery of the T3SS is composed of approximately 20 different proteins, including cytoplasmic components, a base, an export apparatus and a needle. This subunit is involved in the formation of a pore, called the translocon, in host membrane.

It is found in the secreted. The protein resides in the host membrane. The protein localises to the host cell. Its function is as follows. Component of the type III secretion system 1 (SPI-1 T3SS), also called injectisome, which is used to inject bacterial effector proteins into eukaryotic host cells. SipB/SctE1 and SipC/SctB are inserted into the host membrane where they form a pore and allow the translocation of effector proteins into the cytosol of target cells. Functionally, induces macrophage apoptosis either by binding and activating the proapoptotic enzyme caspase-1 (caspase-1 dependent), resulting in the release of interleukin-1 beta active form, or by disrupting mitochondria and inducing autophagy (caspase-1 independent). The former is dependent of its membrane-fusion activity. This Salmonella typhi protein is SPI-1 type 3 secretion system translocon protein SctE.